A 155-amino-acid chain; its full sequence is 6,7-dimethyl-8-ribityllumazine synthase (155 aa).

5-amino-6-(D-ribitylamino)uracil contacts are provided by residues tryptophan 22, 56–58 (SYE), and 80–82 (AVI). 85–86 (DT) is a binding site for (2S)-2-hydroxy-3-oxobutyl phosphate. The active-site Proton donor is the histidine 88. Phenylalanine 113 serves as a coordination point for 5-amino-6-(D-ribitylamino)uracil. (2S)-2-hydroxy-3-oxobutyl phosphate is bound at residue arginine 127.

Belongs to the DMRL synthase family.

The enzyme catalyses (2S)-2-hydroxy-3-oxobutyl phosphate + 5-amino-6-(D-ribitylamino)uracil = 6,7-dimethyl-8-(1-D-ribityl)lumazine + phosphate + 2 H2O + H(+). It functions in the pathway cofactor biosynthesis; riboflavin biosynthesis; riboflavin from 2-hydroxy-3-oxobutyl phosphate and 5-amino-6-(D-ribitylamino)uracil: step 1/2. Catalyzes the formation of 6,7-dimethyl-8-ribityllumazine by condensation of 5-amino-6-(D-ribitylamino)uracil with 3,4-dihydroxy-2-butanone 4-phosphate. This is the penultimate step in the biosynthesis of riboflavin. This Deinococcus radiodurans (strain ATCC 13939 / DSM 20539 / JCM 16871 / CCUG 27074 / LMG 4051 / NBRC 15346 / NCIMB 9279 / VKM B-1422 / R1) protein is 6,7-dimethyl-8-ribityllumazine synthase.